The chain runs to 591 residues: V-type ATP synthase alpha chain (591 aa).

233–240 (GPFGAGKT) contributes to the ATP binding site.

The protein belongs to the ATPase alpha/beta chains family.

It catalyses the reaction ATP + H2O + 4 H(+)(in) = ADP + phosphate + 5 H(+)(out). Functionally, produces ATP from ADP in the presence of a proton gradient across the membrane. The V-type alpha chain is a catalytic subunit. In Streptococcus pyogenes serotype M2 (strain MGAS10270), this protein is V-type ATP synthase alpha chain.